Here is a 125-residue protein sequence, read N- to C-terminus: Small ribosomal subunit protein uS13 (125 aa).

This sequence belongs to the universal ribosomal protein uS13 family. Part of the 30S ribosomal subunit. Forms a loose heterodimer with protein S19. Forms two bridges to the 50S subunit in the 70S ribosome.

Functionally, located at the top of the head of the 30S subunit, it contacts several helices of the 16S rRNA. In the 70S ribosome it contacts the 23S rRNA (bridge B1a) and protein L5 of the 50S subunit (bridge B1b), connecting the 2 subunits; these bridges are implicated in subunit movement. Contacts the tRNAs in the A and P-sites. This chain is Small ribosomal subunit protein uS13, found in Gluconobacter oxydans (strain 621H) (Gluconobacter suboxydans).